The sequence spans 424 residues: Ankyrin repeat domain-containing protein 61 (424 aa).

ANK repeat units lie at residues 80–109, 113–169, 172–201, 205–234, 239–278, 282–311, and 315–348; these read LSFL…DPEA, QGFT…ARVD, HRHC…QVNA, SSMT…SVNC, TGNT…QVNA, DGQA…NVNI, and NGES…PLRL.

This is Ankyrin repeat domain-containing protein 61 (ANKRD61) from Bos taurus (Bovine).